The primary structure comprises 255 residues: Type III pantothenate kinase (255 aa).

7 to 14 (DVGNTRLK) provides a ligand contact to ATP. Substrate is bound by residues tyrosine 96 and 103-106 (GADR). Aspartate 105 functions as the Proton acceptor in the catalytic mechanism. Position 133 (threonine 133) interacts with ATP. Residue threonine 183 participates in substrate binding.

Belongs to the type III pantothenate kinase family. In terms of assembly, homodimer. Requires NH4(+) as cofactor. The cofactor is K(+).

The protein resides in the cytoplasm. The enzyme catalyses (R)-pantothenate + ATP = (R)-4'-phosphopantothenate + ADP + H(+). Its pathway is cofactor biosynthesis; coenzyme A biosynthesis; CoA from (R)-pantothenate: step 1/5. Functionally, catalyzes the phosphorylation of pantothenate (Pan), the first step in CoA biosynthesis. This chain is Type III pantothenate kinase, found in Albidiferax ferrireducens (strain ATCC BAA-621 / DSM 15236 / T118) (Rhodoferax ferrireducens).